Reading from the N-terminus, the 111-residue chain is uncharacterized protein (111 aa).

Its subcellular location is the cytoplasm. The protein localises to the nucleus. This is an uncharacterized protein from Schizosaccharomyces pombe (strain 972 / ATCC 24843) (Fission yeast).